The primary structure comprises 880 residues: Alanine--tRNA ligase (880 aa).

Zn(2+) contacts are provided by histidine 567, histidine 571, cysteine 669, and histidine 673.

This sequence belongs to the class-II aminoacyl-tRNA synthetase family. The cofactor is Zn(2+).

Its subcellular location is the cytoplasm. It carries out the reaction tRNA(Ala) + L-alanine + ATP = L-alanyl-tRNA(Ala) + AMP + diphosphate. In terms of biological role, catalyzes the attachment of alanine to tRNA(Ala) in a two-step reaction: alanine is first activated by ATP to form Ala-AMP and then transferred to the acceptor end of tRNA(Ala). Also edits incorrectly charged Ser-tRNA(Ala) and Gly-tRNA(Ala) via its editing domain. The protein is Alanine--tRNA ligase of Bacillus mycoides (strain KBAB4) (Bacillus weihenstephanensis).